The following is a 364-amino-acid chain: DNA replication and repair protein RecF (364 aa).

Residue 30-37 (GANGSGKT) coordinates ATP.

The protein belongs to the RecF family.

It is found in the cytoplasm. Functionally, the RecF protein is involved in DNA metabolism; it is required for DNA replication and normal SOS inducibility. RecF binds preferentially to single-stranded, linear DNA. It also seems to bind ATP. In Sodalis glossinidius (strain morsitans), this protein is DNA replication and repair protein RecF.